We begin with the raw amino-acid sequence, 692 residues long: ABC transporter F family member 5 (692 aa).

Residues 64 to 95 (EIESLFSKQPSQQDSDRKRNGKSSKNGASGIS) form a disordered region. Residues 86 to 95 (SSKNGASGIS) show a composition bias toward polar residues. ABC transporter domains are found at residues 98-356 (VKLE…ETQN) and 425-640 (VNVK…TKEL). ATP contacts are provided by residues 130-137 (GVNGAGKT) and 457-464 (GPNGCGKS). A disordered region spans residues 644–692 (AELEEKAPKVKAKSKMSKAEKEARKKQKMQAFQQAKQKSKASKNSKRWN). The span at 680–692 (QKSKASKNSKRWN) shows a compositional bias: basic residues.

This sequence belongs to the ABC transporter superfamily. ABCF family. EF3 (TC 3.A.1.121) subfamily.

This Arabidopsis thaliana (Mouse-ear cress) protein is ABC transporter F family member 5 (ABCF5).